Here is a 364-residue protein sequence, read N- to C-terminus: Histidinol-phosphate aminotransferase 2 (364 aa).

The residue at position 223 (K223) is an N6-(pyridoxal phosphate)lysine.

Belongs to the class-II pyridoxal-phosphate-dependent aminotransferase family. Histidinol-phosphate aminotransferase subfamily. Homodimer. Requires pyridoxal 5'-phosphate as cofactor.

The enzyme catalyses L-histidinol phosphate + 2-oxoglutarate = 3-(imidazol-4-yl)-2-oxopropyl phosphate + L-glutamate. The protein operates within amino-acid biosynthesis; L-histidine biosynthesis; L-histidine from 5-phospho-alpha-D-ribose 1-diphosphate: step 7/9. The protein is Histidinol-phosphate aminotransferase 2 (hisC2) of Oceanobacillus iheyensis (strain DSM 14371 / CIP 107618 / JCM 11309 / KCTC 3954 / HTE831).